The chain runs to 145 residues: D-aminoacyl-tRNA deacylase (145 aa).

The short motif at 137-138 (GP) is the Gly-cisPro motif, important for rejection of L-amino acids element.

This sequence belongs to the DTD family. Homodimer.

The protein localises to the cytoplasm. The enzyme catalyses glycyl-tRNA(Ala) + H2O = tRNA(Ala) + glycine + H(+). The catalysed reaction is a D-aminoacyl-tRNA + H2O = a tRNA + a D-alpha-amino acid + H(+). An aminoacyl-tRNA editing enzyme that deacylates mischarged D-aminoacyl-tRNAs. Also deacylates mischarged glycyl-tRNA(Ala), protecting cells against glycine mischarging by AlaRS. Acts via tRNA-based rather than protein-based catalysis; rejects L-amino acids rather than detecting D-amino acids in the active site. By recycling D-aminoacyl-tRNA to D-amino acids and free tRNA molecules, this enzyme counteracts the toxicity associated with the formation of D-aminoacyl-tRNA entities in vivo and helps enforce protein L-homochirality. This Chromohalobacter salexigens (strain ATCC BAA-138 / DSM 3043 / CIP 106854 / NCIMB 13768 / 1H11) protein is D-aminoacyl-tRNA deacylase.